A 369-amino-acid chain; its full sequence is Serine proteinase inhibitor 1 (369 aa).

Belongs to the serpin family. Poxviruses subfamily.

In terms of biological role, important in virulence. This is Serine proteinase inhibitor 1 (SPI-1) from Oryctolagus cuniculus (Rabbit).